The chain runs to 423 residues: UDP-N-acetylglucosamine 1-carboxyvinyltransferase 1 (423 aa).

K23–N24 serves as a coordination point for phosphoenolpyruvate. A UDP-N-acetyl-alpha-D-glucosamine-binding site is contributed by R96. The active-site Proton donor is C120. A 2-(S-cysteinyl)pyruvic acid O-phosphothioketal modification is found at C120. D309 and V331 together coordinate UDP-N-acetyl-alpha-D-glucosamine.

It belongs to the EPSP synthase family. MurA subfamily.

The protein resides in the cytoplasm. The enzyme catalyses phosphoenolpyruvate + UDP-N-acetyl-alpha-D-glucosamine = UDP-N-acetyl-3-O-(1-carboxyvinyl)-alpha-D-glucosamine + phosphate. The protein operates within cell wall biogenesis; peptidoglycan biosynthesis. Cell wall formation. Adds enolpyruvyl to UDP-N-acetylglucosamine. This Streptococcus pyogenes serotype M1 protein is UDP-N-acetylglucosamine 1-carboxyvinyltransferase 1.